A 162-amino-acid polypeptide reads, in one-letter code: Disulfide bond formation protein B (162 aa).

The Cytoplasmic segment spans residues 1–8; the sequence is MTPLFRKA. A helical membrane pass occupies residues 9–25; the sequence is VWLLFAVSVCAFAGSLA. The Periplasmic portion of the chain corresponds to 26–43; it reads AQYVLGMEPCVLCISQRL. Cysteine 35 and cysteine 38 form a disulfide bridge. Residues 44–60 traverse the membrane as a helical segment; it reads CVLATALCTAIVLMCRP. The Cytoplasmic segment spans residues 61 to 67; sequence RRRAGGL. Residues 68-85 traverse the membrane as a helical segment; sequence FGAVFISIPAVTGISVAA. The Periplasmic portion of the chain corresponds to 86–141; the sequence is YQLWLQSLPPGTAPSCGAPWTFRLKGWSLFDWFEPVVRGFGNCAEPDYLLGVALPV. Cysteine 101 and cysteine 128 are oxidised to a cystine. The chain crosses the membrane as a helical span at residues 142–160; it reads WSAAYFLAVVLTVWWAWAR. The Cytoplasmic segment spans residues 161–162; it reads AK.

Belongs to the DsbB family.

The protein resides in the cell inner membrane. Its function is as follows. Required for disulfide bond formation in some periplasmic proteins. Acts by oxidizing the DsbA protein. The polypeptide is Disulfide bond formation protein B (Neisseria meningitidis serogroup C / serotype 2a (strain ATCC 700532 / DSM 15464 / FAM18)).